We begin with the raw amino-acid sequence, 460 residues long: UDP-N-acetylmuramoyl-tripeptide--D-alanyl-D-alanine ligase (460 aa).

Residue 115–121 coordinates ATP; sequence GSSGKTS.

The protein belongs to the MurCDEF family. MurF subfamily.

The protein localises to the cytoplasm. It carries out the reaction D-alanyl-D-alanine + UDP-N-acetyl-alpha-D-muramoyl-L-alanyl-gamma-D-glutamyl-meso-2,6-diaminopimelate + ATP = UDP-N-acetyl-alpha-D-muramoyl-L-alanyl-gamma-D-glutamyl-meso-2,6-diaminopimeloyl-D-alanyl-D-alanine + ADP + phosphate + H(+). The protein operates within cell wall biogenesis; peptidoglycan biosynthesis. In terms of biological role, involved in cell wall formation. Catalyzes the final step in the synthesis of UDP-N-acetylmuramoyl-pentapeptide, the precursor of murein. The chain is UDP-N-acetylmuramoyl-tripeptide--D-alanyl-D-alanine ligase from Buchnera aphidicola subsp. Baizongia pistaciae (strain Bp).